The primary structure comprises 129 residues: Small ribosomal subunit protein uS11 (129 aa).

The protein belongs to the universal ribosomal protein uS11 family. Part of the 30S ribosomal subunit. Interacts with proteins S7 and S18. Binds to IF-3.

Its function is as follows. Located on the platform of the 30S subunit, it bridges several disparate RNA helices of the 16S rRNA. Forms part of the Shine-Dalgarno cleft in the 70S ribosome. This is Small ribosomal subunit protein uS11 from Mannheimia succiniciproducens (strain KCTC 0769BP / MBEL55E).